The chain runs to 333 residues: EP300-interacting inhibitor of differentiation 3 (333 aa).

The protein belongs to the NSE4 family. In terms of assembly, component of the SMC5-SMC6 complex which consists at least of SMC5, SMC6, NSMCE2, NSMCE1, NSMCE4A or EID3 and NSMCE3; EID3 seems to be a testis-specific subunit. NSMCE1, NSMCE4A or EID3 and NSMCE3 probably form a subcomplex that bridges the head domains of the SMC5:SMC6 heterodimer. Homodimer, and heterodimer with EID2. Interacts with the C-terminal region of CREBBP. As to expression, highly expressed in testis.

Its subcellular location is the nucleus. The protein resides in the cytoplasm. It is found in the chromosome. The protein localises to the telomere. In terms of biological role, tissue-specific component of the SMC5-SMC6 complex, a complex involved in repair of DNA double-strand breaks by homologous recombination. The complex may promote sister chromatid homologous recombination by recruiting the SMC1-SMC3 cohesin complex to double-strand breaks. The complex is required for telomere maintenance via recombination and mediates sumoylation of shelterin complex (telosome) components. Functionally, acts as a repressor of nuclear receptor-dependent transcription possibly by interfering with CREBBP-dependent coactivation. May function as a coinhibitor of other CREBBP/EP300-dependent transcription factors. In Homo sapiens (Human), this protein is EP300-interacting inhibitor of differentiation 3.